Consider the following 945-residue polypeptide: MSELARFFIELGEKWQKRWAEARVYEPAPTLGVPKFFITAAYPYPNGAIHIGHGRTYLIADVLARFHRHLGRAVLFPMAFHYTGTPILTIAEAIAAGDETVVEEYMAIYGVPEEEMRKMGDPLYLARYFHEQSKRAMQKFGLSIDWTREFTTIDPEYQRFIQWQFEKLRKKGLIVRGRHPVGWCPRHSMPVGAHDTKDDKEPDIGEWTLIYFADRDGLIFPAATLRPETVLGVTNMWINPEGEYVVAEYDGRKMVLSRDAAYRLSFQGSVKVLREAKGREFVGREVQNPVTGEWVPIYGAKFVDPKVGTGVVMSVPAHAPYDYAALRDIGAIRLIPLIKVEGYGEYPAKDVVERMEIKSQTDPALEEATKEVYSAEYARGVMREDVVELVGRHLPEPARSMVMAVFKMYFAGRPVREAREFISKWLAEAGLGGVMYDIMNKPVYCRCGTEIVVKVLEDQWFINYGEPRWKELAKKLVEEMTIVPPEAKAQFFATIDWLDKRACARTRGLGTPLPWSHGWVIESLSDSTIYMAYYAVIKGIRRHNLRPEQLTEEFWDYVFLGVGTPEEVSAKTGIPAEALRAIREEFEFWYPLDSRNSGKDLIPNHLTFFIFNHVAIFPREKWPRQIVANGWVLREGEKMSKSKRNVLPLDKAVEMYGPDPLRATLAISAEVEQDLDFRHAEAVRNAQQLMSIYTLAQRLAQSAEDREPTWLDRWLLSEVALALERVRDAYEKVRVRQAAVELLYNIKNIFDSYMTAVERPSRLAVEVAKAWAVALEPIAPHLAEEVWSLLGGEGFVTSAKWPQLKPDPAALLARRYVDMVVEDVKKIPAYGEGVRRVVLYINPNFTWVKAALNNDVKSAIAAGTPPQLAKRLVELVRTLGDEVRSLIAAVENFDEREALLSYKNYVEKALGAPVEVYTAEDPAAPDLGGKKKAALPLKPGIFIER.

A 'HIGH' region motif is present at residues 43–53 (PYPNGAIHIGH). The 'KMSKS' region motif lies at 638-642 (KMSKS). Lys-641 is a binding site for ATP.

It belongs to the class-I aminoacyl-tRNA synthetase family.

It localises to the cytoplasm. The enzyme catalyses tRNA(Leu) + L-leucine + ATP = L-leucyl-tRNA(Leu) + AMP + diphosphate. This is Leucine--tRNA ligase from Pyrobaculum arsenaticum (strain DSM 13514 / JCM 11321 / PZ6).